Consider the following 832-residue polypeptide: Beta-galactosidase (832 aa).

Residues 1–25 (MALKLVLMLMVALLAAVWSPPAVTA) form the signal peptide. Catalysis depends on Glu183, which acts as the Proton donor. Glu252 serves as the catalytic Nucleophile. Residues 741-832 (AYGRPKVHLS…KKLAVEAICE (92 aa)) enclose the SUEL-type lectin domain.

This sequence belongs to the glycosyl hydrolase 35 family.

It localises to the secreted. The protein resides in the extracellular space. The protein localises to the apoplast. The enzyme catalyses Hydrolysis of terminal non-reducing beta-D-galactose residues in beta-D-galactosides.. The chain is Beta-galactosidase from Asparagus officinalis (Garden asparagus).